We begin with the raw amino-acid sequence, 759 residues long: 5-methyltetrahydropteroyltriglutamate--homocysteine methyltransferase (759 aa).

5-methyltetrahydropteroyltri-L-glutamate-binding positions include 17 to 20 (RELK) and Lys116. L-homocysteine is bound by residues 430–432 (IGS) and Glu483. L-methionine contacts are provided by residues 430–432 (IGS) and Glu483. Residues 514–515 (RC) and Trp560 each bind 5-methyltetrahydropteroyltri-L-glutamate. L-homocysteine is bound at residue Asp598. Asp598 contributes to the L-methionine binding site. Glu604 is a binding site for 5-methyltetrahydropteroyltri-L-glutamate. Residues His641, Cys643, and Glu665 each contribute to the Zn(2+) site. Catalysis depends on His694, which acts as the Proton donor. Residue Cys726 coordinates Zn(2+).

Belongs to the vitamin-B12 independent methionine synthase family. Requires Zn(2+) as cofactor.

It carries out the reaction 5-methyltetrahydropteroyltri-L-glutamate + L-homocysteine = tetrahydropteroyltri-L-glutamate + L-methionine. It participates in amino-acid biosynthesis; L-methionine biosynthesis via de novo pathway; L-methionine from L-homocysteine (MetE route): step 1/1. In terms of biological role, catalyzes the transfer of a methyl group from 5-methyltetrahydrofolate to homocysteine resulting in methionine formation. The polypeptide is 5-methyltetrahydropteroyltriglutamate--homocysteine methyltransferase (Lactococcus lactis subsp. lactis (strain IL1403) (Streptococcus lactis)).